We begin with the raw amino-acid sequence, 214 residues long: C-type lectin domain family 2 member L (214 aa).

A disordered region spans residues 1-56 (MEPAREPPSRARPPPPLAARPAPAPAAPRPRSPAEAEARGPEGLLRRSGSGYEGST). Over residues 10–31 (RARPPPPLAARPAPAPAAPRPR) the composition is skewed to pro residues. A Phosphoserine modification is found at S32. A helical transmembrane segment spans residues 69–89 (LLLGAIAVLLFAILVVMSILA). Residues 107 to 209 (YGRKCYFFSE…CLMTRPWVCS (103 aa)) enclose the C-type lectin domain. 2 disulfide bridges follow: C128–C208 and C187–C200.

It is found in the membrane. This chain is C-type lectin domain family 2 member L (CLEC2L), found in Homo sapiens (Human).